Reading from the N-terminus, the 1468-residue chain is MDVLEMLRASASGSYNTIFSDAWCQYVSKQITATVYMYCALVMMSLLFIAWFLYFKRMARLRLRDELARSISTATNSSGDLRGLRFRKRDKMLFYGRRMLRKVKNVSGQMYSSGKGYKRRAVMRFARRILQLRRDNMPLEMRTVEPPAEYLEETIEGSDRVPPDALYMLQSIRIFGHFEKPVFLRLCKHTQLLELMAGDYLFKITDPDDSVYIVQSGMINVYISNADGSTLSLKTVRKGESVTSLLSFIDVLSGNPSYYKTVTAKAIEKSVVIRLPMQAFEEVFQDNPDVMIRVIQVIMIRLQRVLFTALRNYLGLNAELVQNHMRYKSVSTMSGPINSQTSQSSRQAPNGPPMVINQLNLMQSAASGTGSGVSVTVTRPPSSPSRHSREEHTLSDPNPNPDGSFHGTTNLFTEVHGDAPNADLFQQQQQPSVGNLSTRRSSITLMTPDGSHSCVQTPGVTTSIDMRLVQSSAVDSLRKELGLSEEDSHIIEPFVELRELEPNVTLITEGNADDVCVWFVMTGTLAVYQSNQDATRAKQDKSDMLIHFVHPGEIVGGLAMLTGEASAYTIRSRSYARIAFIRRAAIYQIMRQRPRIVLDLGNGVVRRLSPLVRQCDYALDWIFLESGRAVYRQDESSDSTYIVLSGRMRSVITHPGGKKEIVGEYGKGDLVGIVEMITETSRTTTVMAVRDSELAKLPEGLFNAIKLRYPIVVTKLISFLSHRFLGSMQTRSGSGAPGAPVEANPVTHKYSTVALVPITDEVPLTPFTYELYHSLCAIGPVLRLTSDVVRKQLGSNIFEAANEYRLTSWLAQQEDRNIITLYQCDSSLSAWTQRCMRQADVILIVGLGDRSHLVGKFEREIDRLAMRTQKELVLLYPEATNAKPANTLSWLNARPWVTKHHHVLCVKRIFTRKSQYRINDLYSRVLLSEPNMHSDFSRLARWLTGNSIGLVLGGGGARGAAHIGMLKAIQEAGIPVDMVGGVSIGALMGALWCSDRNITTVTQKAREWSKKMTKWFLQLLDLTYPITSMFSGREFNKTIHDTFGDVSIEDLWIPYFTLTTDITASCHRIHTNGSLWRYVRSSMSLSGYMPPLCDPKDGHLLLDGGYVNNLPGHLWRYCRASMSIAGVFPPFCDYRDGHLLLDGCYTNNVPADVMHNLGAAHIIAIDVGSQDDTDLTNYGDDLSGWWLLYKKWNPFTSPVKVPDLPDIQSRLAYVSCVRQLEEVKNSDYCEYIRPPIDKYKTLAFGSFDEIRDVGYVFGKNYFENMAKAGRLGRFNQWFNKEPPKRVNHASLNEYTFIDLAQIVCRLPETYAVNTAELFSEDEDCDGYISEPTTLNTDRRRIQVSRAGNSLSFSETEMDSDVELDLKLERKMDKSTQSSPPTSSRTDMRGKEEAKHMANWHWGVKHKDETGSGATVATHTQTGQEQELQQQQKLQQLQQDQGARAEQLVDKDKEEDKENRSSPNNETKN.

Residues 1–34 are Lumenal-facing; it reads MDVLEMLRASASGSYNTIFSDAWCQYVSKQITAT. Residues 35–55 traverse the membrane as a helical segment; sequence VYMYCALVMMSLLFIAWFLYF. Residues 56 to 1468 lie on the Cytoplasmic side of the membrane; that stretch reads KRMARLRLRD…RSSPNNETKN (1413 aa). 174–301 lines the a nucleoside 3',5'-cyclic phosphate pocket; it reads IFGHFEKPVF…IRVIQVIMIR (128 aa). Composition is skewed to polar residues over residues 332-348 and 357-366; these read TMSG…SRQA and NQLNLMQSAA. The disordered stretch occupies residues 332–411; the sequence is TMSGPINSQT…DGSFHGTTNL (80 aa). S442 and S451 each carry phosphoserine. A nucleoside 3',5'-cyclic phosphate is bound by residues 480–607 and 596–723; these read ELGL…VVRR and IVLD…LSHR. Residues 950-1116 form the PNPLA domain; it reads LVLGGGGARG…VNNLPGHLWR (167 aa). A GXGXXG motif is present at residues 954–959; it reads GGGARG. The GXSXG motif lies at 981–985; that stretch reads GVSIG. The active-site Nucleophile is the S983. D1103 functions as the Proton acceptor in the catalytic mechanism. The DGA/G signature appears at 1103-1105; that stretch reads DGG. At S1197 the chain carries Phosphoserine. The interval 1368 to 1468 is disordered; that stretch reads ERKMDKSTQS…RSSPNNETKN (101 aa). Low complexity predominate over residues 1374–1383; that stretch reads STQSSPPTSS. A compositionally biased stretch (basic and acidic residues) spans 1385 to 1395; that stretch reads TDMRGKEEAKH. Residues 1419-1441 show a composition bias toward low complexity; the sequence is TQTGQEQELQQQQKLQQLQQDQG. Residues 1446–1459 are compositionally biased toward basic and acidic residues; the sequence is QLVDKDKEEDKENR.

The protein belongs to the NTE family. Interacts with Pka-C3; interaction inhibits the catalytic function of Pka-C3 and the esterase activity of sws.

The protein resides in the endoplasmic reticulum membrane. It carries out the reaction a 1-acyl-sn-glycero-3-phosphocholine + H2O = sn-glycerol 3-phosphocholine + a fatty acid + H(+). Functionally, phospholipase B that deacylates intracellular phosphatidylcholine (PtdCho), generating glycerophosphocholine (GroPtdCho). This deacylation occurs at both sn-2 and sn-1 positions of PtdCho. Its specific chemical modification by certain organophosphorus (OP) compounds leads to distal axonopathy. Plays a role in the signaling mechanism between neurons and glia that regulates glia wrapping during development of the adult brain. Essential for membrane lipid homeostasis and cell survival in both neurons and glia of the adult brain. This Drosophila sechellia (Fruit fly) protein is Neuropathy target esterase sws.